A 458-amino-acid polypeptide reads, in one-letter code: Probable alpha-L-glutamate ligase (458 aa).

The segment at 1–162 is unknown; the sequence is MSDNKFIIGS…YGVKSAKKSG (162 aa). The interval 163–458 is alpha-L-glutamate ligase; sequence LKIGLLASNP…IEKKLGWKAE (296 aa). The 184-residue stretch at 267–450 folds into the ATP-grasp domain; it reads LQLLQKNNLD…IAGAMIDSIE (184 aa). ATP contacts are provided by residues Lys304, 341–342, Asp350, and 374–376; these read EF and RAN. Mg(2+) is bound by residues Asp411, Glu423, and Asn425. The Mn(2+) site is built by Asp411, Glu423, and Asn425.

The protein in the C-terminal section; belongs to the RimK family. Mg(2+) serves as cofactor. Requires Mn(2+) as cofactor.

The sequence is that of Probable alpha-L-glutamate ligase from Shewanella halifaxensis (strain HAW-EB4).